The chain runs to 197 residues: MSARAPKELRLALPPCLLNRTFASPNASGSGNTGARGPGAVGSGTCITQVGQQLFQSFSSTLVLIVLVTLIFCLIVLSLSTFHIHKRRMKKRKMQRAQEEYERDHCSGSRGGGGLPRPGRQAPTHAKETRLERQPRDSPFCAPSNASSLSSSSPGLPCQGPCAPPPPPPASSPQGAHAASSCLDTAGEGLLQTVVLS.

The signal sequence occupies residues 1-23; that stretch reads MSARAPKELRLALPPCLLNRTFA. Residues 24 to 61 lie on the Extracellular side of the membrane; sequence SPNASGSGNTGARGPGAVGSGTCITQVGQQLFQSFSST. An N-linked (GlcNAc...) asparagine glycan is attached at asparagine 26. The helical transmembrane segment at 62-82 threads the bilayer; sequence LVLIVLVTLIFCLIVLSLSTF. At 83–197 the chain is on the cytoplasmic side; the sequence is HIHKRRMKKR…EGLLQTVVLS (115 aa). The tract at residues 94–180 is disordered; that stretch reads MQRAQEEYER…SSPQGAHAAS (87 aa). 2 stretches are compositionally biased toward basic and acidic residues: residues 96–107 and 125–136; these read RAQEEYERDHCS and HAKETRLERQPR. Residues 141–161 are compositionally biased toward low complexity; that stretch reads CAPSNASSLSSSSPGLPCQGP. A compositionally biased stretch (pro residues) spans 162–171; it reads CAPPPPPPAS.

Its subcellular location is the membrane. This is an uncharacterized protein from Homo sapiens (Human).